Consider the following 371-residue polypeptide: 4-hydroxy-3-methylbut-2-en-1-yl diphosphate synthase (flavodoxin) (371 aa).

[4Fe-4S] cluster is bound by residues C270, C273, C305, and E312.

It belongs to the IspG family. Requires [4Fe-4S] cluster as cofactor.

It carries out the reaction (2E)-4-hydroxy-3-methylbut-2-enyl diphosphate + oxidized [flavodoxin] + H2O + 2 H(+) = 2-C-methyl-D-erythritol 2,4-cyclic diphosphate + reduced [flavodoxin]. Its pathway is isoprenoid biosynthesis; isopentenyl diphosphate biosynthesis via DXP pathway; isopentenyl diphosphate from 1-deoxy-D-xylulose 5-phosphate: step 5/6. Converts 2C-methyl-D-erythritol 2,4-cyclodiphosphate (ME-2,4cPP) into 1-hydroxy-2-methyl-2-(E)-butenyl 4-diphosphate. This chain is 4-hydroxy-3-methylbut-2-en-1-yl diphosphate synthase (flavodoxin), found in Shewanella denitrificans (strain OS217 / ATCC BAA-1090 / DSM 15013).